We begin with the raw amino-acid sequence, 109 residues long: Nucleoid-associated protein SG0690 (109 aa).

A disordered region spans residues 1–23; sequence MFGKGGMGNLMKQAQQMQEKMQR.

It belongs to the YbaB/EbfC family. As to quaternary structure, homodimer.

The protein localises to the cytoplasm. It is found in the nucleoid. Functionally, binds to DNA and alters its conformation. May be involved in regulation of gene expression, nucleoid organization and DNA protection. The sequence is that of Nucleoid-associated protein SG0690 from Sodalis glossinidius (strain morsitans).